The following is a 245-amino-acid chain: Orotidine 5'-phosphate decarboxylase (245 aa).

Substrate-binding positions include Asp-22, Lys-44, 71-80, Thr-131, Arg-192, Gln-201, Gly-221, and Arg-222; that span reads DLKFHDIPNT. Residue Lys-73 is the Proton donor of the active site.

The protein belongs to the OMP decarboxylase family. Type 1 subfamily. In terms of assembly, homodimer.

It carries out the reaction orotidine 5'-phosphate + H(+) = UMP + CO2. It functions in the pathway pyrimidine metabolism; UMP biosynthesis via de novo pathway; UMP from orotate: step 2/2. Functionally, catalyzes the decarboxylation of orotidine 5'-monophosphate (OMP) to uridine 5'-monophosphate (UMP). This is Orotidine 5'-phosphate decarboxylase from Salmonella paratyphi A (strain ATCC 9150 / SARB42).